Reading from the N-terminus, the 453-residue chain is Allantoinase (453 aa).

The Zn(2+) site is built by H59, H61, K146, H186, H242, and D315. N6-carboxylysine is present on K146.

The protein belongs to the metallo-dependent hydrolases superfamily. Allantoinase family. As to quaternary structure, homotetramer. It depends on Zn(2+) as a cofactor. In terms of processing, carboxylation allows a single lysine to coordinate two zinc ions.

It catalyses the reaction (S)-allantoin + H2O = allantoate + H(+). Its pathway is nitrogen metabolism; (S)-allantoin degradation; allantoate from (S)-allantoin: step 1/1. Functionally, catalyzes the conversion of allantoin (5-ureidohydantoin) to allantoic acid by hydrolytic cleavage of the five-member hydantoin ring. In Salmonella paratyphi B (strain ATCC BAA-1250 / SPB7), this protein is Allantoinase.